The following is a 941-amino-acid chain: MEPAKPSGNNMGSNDERMQDYRPDPMMEESIKEILEESLMCDTSFDDLIIPGLESFGLIIPESSNNIESNNVEEGSDGELKTLAAQSAGNCIQSIGASVKAAMKQEQSDMEDKLIKCAGLLTQQQSMFIGLGLEQLSQLININLLSSASTKYVESYSKMLHGKELDFFNWCEPRFIVFACDKFDGLVKKVASESRNLLLDLRANMNNDIIKAVKDIFSKATVTLDCQKLNQGATMLMMMAHNKEMSNPDISSKDFCEKINTLKQTLLEGKNEIVETNAKNMQILQTFAIKQMNQIFMDGCDKAFLKLNVNCKNLITAAKNLANTILQSIVICSNEFSWQHLKLLRRGFKVTMLNMITQACECLESDYDDTGLIKPLTPLQIMDGYINMNKNRQSSICDGNTDPSDSMILDLADFDDHGRYSEESSIESIHEDDDNKMYPCTPSPEVPGKSKYVGTFTENSRQSGDEQTNPNCVGTASVTDLGGPDNLNSISGLQSCKNMLLERLLDTQCDSVVEGTEQDGSYGNTLISEMMMFGYETDHSAPYESESDNNDEIDYIANSDSAARTNNIHMNSTDENTPFSNSICSPPEVTPSKKNVKPKSMTPGSKPKKRVAKRKHVSSKSPKNKKIKTDQLPKAADVIVISSESEDEEDGDNIIGNSILIKAIKSESDSESSSESNDCTSEHKQLHLSDYDEVTNNGHCPSYGFPTPVFTIPIRSMQGTGGIKSKFIPKKNWIWYMKKTHQVDNCPIHNSENVDAKDDSDGTEAKHCFMNHFVPIKTDDEDYDKNNVSYIYNKIQNSKIDSGDIIPTKKLIIDMVMDNFMDLNDIIKQGITKHCQDLCNKYNVVTPTTCEDDLNMTNSQTFATTATQVFDPPVTGNNSSILNIINDTTSQNDENRCTEGTSNSNEKCTNISDCNSDGTEAFKLDGYPSDYDPFVENAQIY.

Disordered regions lie at residues 1–23 and 567–632; these read MEPA…DYRP and NIHM…TDQL. Basic and acidic residues predominate over residues 14–23; the sequence is NDERMQDYRP. Residues 567–584 show a composition bias toward polar residues; the sequence is NIHMNSTDENTPFSNSIC. A compositionally biased stretch (basic residues) spans 606 to 626; sequence KPKKRVAKRKHVSSKSPKNKK.

This is Immediate-early protein 1 (U90/U89) from Homo sapiens (Human).